The following is a 468-amino-acid chain: 3-isopropylmalate dehydratase large subunit (468 aa).

[4Fe-4S] cluster-binding residues include cysteine 347, cysteine 407, and cysteine 410.

This sequence belongs to the aconitase/IPM isomerase family. LeuC type 1 subfamily. Heterodimer of LeuC and LeuD. [4Fe-4S] cluster serves as cofactor.

The enzyme catalyses (2R,3S)-3-isopropylmalate = (2S)-2-isopropylmalate. It functions in the pathway amino-acid biosynthesis; L-leucine biosynthesis; L-leucine from 3-methyl-2-oxobutanoate: step 2/4. In terms of biological role, catalyzes the isomerization between 2-isopropylmalate and 3-isopropylmalate, via the formation of 2-isopropylmaleate. The protein is 3-isopropylmalate dehydratase large subunit of Synechococcus elongatus (strain ATCC 33912 / PCC 7942 / FACHB-805) (Anacystis nidulans R2).